The following is a 179-amino-acid chain: Large ribosomal subunit protein uL5 (179 aa).

This sequence belongs to the universal ribosomal protein uL5 family. Part of the 50S ribosomal subunit; part of the 5S rRNA/L5/L18/L25 subcomplex. Contacts the 5S rRNA and the P site tRNA. Forms a bridge to the 30S subunit in the 70S ribosome.

In terms of biological role, this is one of the proteins that bind and probably mediate the attachment of the 5S RNA into the large ribosomal subunit, where it forms part of the central protuberance. In the 70S ribosome it contacts protein S13 of the 30S subunit (bridge B1b), connecting the 2 subunits; this bridge is implicated in subunit movement. Contacts the P site tRNA; the 5S rRNA and some of its associated proteins might help stabilize positioning of ribosome-bound tRNAs. The protein is Large ribosomal subunit protein uL5 of Idiomarina loihiensis (strain ATCC BAA-735 / DSM 15497 / L2-TR).